Here is a 411-residue protein sequence, read N- to C-terminus: UPF0761 membrane protein PA0951 (411 aa).

Helical transmembrane passes span 36-56 (LFAV…IPAF), 92-112 (HLTW…LVTI), 132-152 (FLLY…GFAV), 174-194 (LLGL…YSAV), 207-229 (GGVF…VSLF), and 244-264 (IFLL…VLVC).

It belongs to the UPF0761 family.

The protein resides in the cell inner membrane. This Pseudomonas aeruginosa (strain ATCC 15692 / DSM 22644 / CIP 104116 / JCM 14847 / LMG 12228 / 1C / PRS 101 / PAO1) protein is UPF0761 membrane protein PA0951.